The chain runs to 155 residues: 3-hydroxyacyl-[acyl-carrier-protein] dehydratase FabZ (155 aa).

Residue His-57 is part of the active site.

It belongs to the thioester dehydratase family. FabZ subfamily.

It is found in the cytoplasm. It catalyses the reaction a (3R)-hydroxyacyl-[ACP] = a (2E)-enoyl-[ACP] + H2O. Involved in unsaturated fatty acids biosynthesis. Catalyzes the dehydration of short chain beta-hydroxyacyl-ACPs and long chain saturated and unsaturated beta-hydroxyacyl-ACPs. This chain is 3-hydroxyacyl-[acyl-carrier-protein] dehydratase FabZ, found in Cereibacter sphaeroides (strain KD131 / KCTC 12085) (Rhodobacter sphaeroides).